Here is a 405-residue protein sequence, read N- to C-terminus: Deoxyguanosinetriphosphate triphosphohydrolase-like protein (405 aa).

The HD domain occupies Arg75–Asn219.

The protein belongs to the dGTPase family. Type 2 subfamily.

This is Deoxyguanosinetriphosphate triphosphohydrolase-like protein from Allorhizobium ampelinum (strain ATCC BAA-846 / DSM 112012 / S4) (Agrobacterium vitis (strain S4)).